A 480-amino-acid polypeptide reads, in one-letter code: MSLKKKISYSEDVSGSEKANELLKWLQAYIPGKDSNIVVEHEPSKDAAKELIRGDYRWGHQDDDKSKAFQLKYSFLESKPDNMPWHISEFSAFNEAQKAAAKLSIQSWADVANINFVETTDAKEANVTFGFFDVSLTGSYAFAYLPTPEKTQVGTWYNAKSRTFLNNDIDVNGYGRQTFTHEIGHTLGLQHPADYNASDKVSPTYKNSATYFEDSRAYTVMSYFGEKNTGQDFKGIYSSAPLLNDISAIQAVYGANNTIRADDTVYGFNSNTDRDFYTAKDENSKLLFTAWDTGGNDTFDFSGFTQDQRINLNEASFSDVGGLKGNVSIARGVTIENAIGGSGNDVLIGNDAANTLKGGAGDDIIYGGLGADNLWGGEGNDTFVYLSAKESPPLERDWIHDFVSGKDKIDVSLFDLGEAGKGGVKFVREFTGEVGEAVLRYNTVDKVNDFAINLGGEFSYDDFWVKIVGEPILESDFILS.

His-181 provides a ligand contact to Zn(2+). The active site involves Glu-182. The Zn(2+) site is built by His-185 and His-191. Ca(2+)-binding residues include Arg-260, Asp-263, Asp-292, Gly-294, Gly-295, Asp-297, Thr-334, and Glu-336. Hemolysin-type calcium-binding repeat units lie at residues 339–356 (IGGS…ANTL) and 357–374 (KGGA…ADNL).

Belongs to the peptidase M10B family. The cofactor is Zn(2+). Ca(2+) is required as a cofactor.

The protein resides in the secreted. The catalysed reaction is Preferential cleavage of bonds with hydrophobic residues in P1'.. The protein is Serralysin (prtA) of Photorhabdus laumondii subsp. laumondii (strain DSM 15139 / CIP 105565 / TT01) (Photorhabdus luminescens subsp. laumondii).